A 164-amino-acid chain; its full sequence is Large ribosomal subunit protein eL24z (164 aa).

Positions 117–133 (ERIKKTKDEKKAKKVEY) are enriched in basic and acidic residues. The segment at 117-164 (ERIKKTKDEKKAKKVEYASKQQKSQVKGNIPKSAAPKAAKMGGGGGRR) is disordered.

This sequence belongs to the eukaryotic ribosomal protein eL24 family. In terms of assembly, interacts with the cauliflower mosaic virus transactivator TAV to form a TAV/60S complex. Interacts with REIL1 AND REIL2.

Might have an extraribosomal function in reinitiation of translation. In Arabidopsis thaliana (Mouse-ear cress), this protein is Large ribosomal subunit protein eL24z (RPL24A).